The following is a 440-amino-acid chain: Glycerophosphocholine cholinephosphodiesterase ENPP6 (440 aa).

The N-terminal stretch at 1 to 22 (MAGKLWTFLLLFGFSWVWPASA) is a signal peptide. Substrate contacts are provided by D32, S71, and N92. D32 and S71 together coordinate Zn(2+). Catalysis depends on S71, which acts as the Nucleophile. Position 71 is a phosphoserine (S71). N100 and N118 each carry an N-linked (GlcNAc...) asparagine glycan. An intrachain disulfide couples C142 to C154. Residue D193 participates in substrate binding. Residues D193, H197, D240, and H241 each contribute to the Zn(2+) site. H241 contributes to the substrate binding site. N341 is a glycosylation site (N-linked (GlcNAc...) asparagine). H354 is a substrate binding site. H354 serves as a coordination point for Zn(2+). A glycan (N-linked (GlcNAc...) asparagine) is linked at N404. A lipid anchor (GPI-anchor amidated serine) is attached at S419. A propeptide spans 420 to 440 (SSPSIPPNSCALVLILLLYFV) (removed in mature form).

This sequence belongs to the nucleotide pyrophosphatase/phosphodiesterase family. As to quaternary structure, homodimer; disulfide-linked. Homotetramer. The cofactor is Zn(2+).

It localises to the cell membrane. The enzyme catalyses sn-glycerol 3-phosphocholine + H2O = phosphocholine + glycerol + H(+). The catalysed reaction is a 1-acyl-sn-glycero-3-phosphocholine + H2O = a 1-acyl-sn-glycerol + phosphocholine + H(+). It carries out the reaction a 1-O-alkyl-sn-glycero-3-phosphocholine + H2O = a 1-O-alkyl-sn-glycerol + phosphocholine + H(+). It catalyses the reaction 1-dodecanoyl-sn-glycero-3-phosphocholine + H2O = 1-dodecanoyl-sn-glycerol + phosphocholine + H(+). The enzyme catalyses 1-hexadecanoyl-sn-glycero-3-phosphocholine + H2O = 1-hexadecanoyl-sn-glycerol + phosphocholine + H(+). The catalysed reaction is 1-(5Z,8Z,11Z,14Z-eicosatetraenoyl)-sn-glycero-3-phosphocholine + H2O = 1-(5Z,8Z,11Z,14Z-eicosatetraenoyl)-sn-glycerol + phosphocholine + H(+). It carries out the reaction 1-tetradecanoyl-sn-glycero-3-phosphocholine + H2O = 1-tetradecanoyl-sn-glycerol + phosphocholine + H(+). It catalyses the reaction sphing-4-enine-phosphocholine + H2O = sphing-4-enine + phosphocholine + H(+). The enzyme catalyses 1-(9Z-octadecenoyl)-sn-glycero-3-phosphocholine + H2O = 1-(9Z-octadecenoyl)-sn-glycerol + phosphocholine + H(+). The catalysed reaction is 1-(9Z,12Z)-octadecadienoyl-sn-glycero-3-phosphocholine + H2O = 1-(9Z,12Z-octadecadienoyl)-sn-glycerol + phosphocholine + H(+). It carries out the reaction glycero-2-phosphocholine + H2O = phosphocholine + glycerol + H(+). With respect to regulation, inhibited by EDTA and EGTA in vitro. Choline-specific glycerophosphodiesterase that hydrolyzes glycerophosphocholine (GPC) and lysophosphatidylcholine (LPC) and contributes to supplying choline to the cells. Has a preference for LPC with short (12:0 and 14:0) or polyunsaturated (18:2 and 20:4) fatty acids. In vitro, hydrolyzes only choline-containing lysophospholipids, such as sphingosylphosphorylcholine (SPC), platelet-activating factor (PAF) and lysoPAF, but not other lysophospholipids. This chain is Glycerophosphocholine cholinephosphodiesterase ENPP6, found in Rattus norvegicus (Rat).